A 511-amino-acid chain; its full sequence is 2-isopropylmalate synthase (511 aa).

Basic and acidic residues predominate over residues 1 to 16; sequence MTRKIDIFDTTLRDGE. A disordered region spans residues 1–23; that stretch reads MTRKIDIFDTTLRDGEQSPGASM. Residues 5–268 enclose the Pyruvate carboxyltransferase domain; it reads IDIFDTTLRD…HTDVVTQELT (264 aa). Mn(2+) contacts are provided by aspartate 14, histidine 203, histidine 205, and asparagine 239. Positions 392 to 511 are regulatory domain; that stretch reads ALESVQVVCG…IQTTRSKQGK (120 aa).

This sequence belongs to the alpha-IPM synthase/homocitrate synthase family. LeuA type 1 subfamily. As to quaternary structure, homodimer. Mn(2+) is required as a cofactor.

Its subcellular location is the cytoplasm. It catalyses the reaction 3-methyl-2-oxobutanoate + acetyl-CoA + H2O = (2S)-2-isopropylmalate + CoA + H(+). Its pathway is amino-acid biosynthesis; L-leucine biosynthesis; L-leucine from 3-methyl-2-oxobutanoate: step 1/4. Catalyzes the condensation of the acetyl group of acetyl-CoA with 3-methyl-2-oxobutanoate (2-ketoisovalerate) to form 3-carboxy-3-hydroxy-4-methylpentanoate (2-isopropylmalate). This chain is 2-isopropylmalate synthase, found in Olsenella uli (strain ATCC 49627 / DSM 7084 / CCUG 31166 / CIP 109912 / JCM 12494 / LMG 11480 / NCIMB 702895 / VPI D76D-27C) (Lactobacillus uli).